The chain runs to 289 residues: Protoheme IX farnesyltransferase (289 aa).

9 helical membrane-spanning segments follow: residues 13–33, 40–60, 85–105, 111–131, 139–159, 168–188, 212–232, 234–254, and 269–289; these read LIKP…LYLA, VFLI…SFIF, ISIP…FYML, LLTA…YTIF, NIVI…AAIG, ILFT…AIFL, SIFF…FLEP, MGLL…ILSY, and FLFS…DHMI.

This sequence belongs to the UbiA prenyltransferase family. Protoheme IX farnesyltransferase subfamily.

The protein localises to the cell inner membrane. The catalysed reaction is heme b + (2E,6E)-farnesyl diphosphate + H2O = Fe(II)-heme o + diphosphate. The protein operates within porphyrin-containing compound metabolism; heme O biosynthesis; heme O from protoheme: step 1/1. In terms of biological role, converts heme B (protoheme IX) to heme O by substitution of the vinyl group on carbon 2 of heme B porphyrin ring with a hydroxyethyl farnesyl side group. This Leptospira borgpetersenii serovar Hardjo-bovis (strain JB197) protein is Protoheme IX farnesyltransferase.